The chain runs to 489 residues: Mitochondrial-processing peptidase subunit beta (489 aa).

The N-terminal 45 residues, 1–45 (MAAAAARVVLLPAARRRLWGFSESLLIRGAAGRSSYFGENRLRST), are a transit peptide targeting the mitochondrion. His101 provides a ligand contact to Zn(2+). Glu104 serves as the catalytic Proton acceptor. Zn(2+) contacts are provided by His105 and Glu181.

This sequence belongs to the peptidase M16 family. In terms of assembly, heterodimer of PMPCA (alpha) and PMPCB (beta) subunits, forming the mitochondrial processing protease (MPP) in which PMPCA is involved in substrate recognition and binding and PMPCB is the catalytic subunit. It depends on Zn(2+) as a cofactor.

Its subcellular location is the mitochondrion matrix. It carries out the reaction Release of N-terminal transit peptides from precursor proteins imported into the mitochondrion, typically with Arg in position P2.. Its activity is regulated as follows. Binding to PMPCA is required for catalytic activity. Catalytic subunit of the essential mitochondrial processing protease (MPP), which cleaves the mitochondrial sequence off newly imported precursors proteins. Preferentially, cleaves after an arginine at position P2. Required for PINK1 turnover by coupling PINK1 mitochondrial import and cleavage, which results in subsequent PINK1 proteolysis. The polypeptide is Mitochondrial-processing peptidase subunit beta (PMPCB) (Pongo abelii (Sumatran orangutan)).